The following is a 286-amino-acid chain: UDP-3-O-acyl-N-acetylglucosamine deacetylase (286 aa).

Zn(2+) contacts are provided by His79, His237, and Asp241. His264 functions as the Proton donor in the catalytic mechanism.

This sequence belongs to the LpxC family. It depends on Zn(2+) as a cofactor.

The catalysed reaction is a UDP-3-O-[(3R)-3-hydroxyacyl]-N-acetyl-alpha-D-glucosamine + H2O = a UDP-3-O-[(3R)-3-hydroxyacyl]-alpha-D-glucosamine + acetate. Its pathway is glycolipid biosynthesis; lipid IV(A) biosynthesis; lipid IV(A) from (3R)-3-hydroxytetradecanoyl-[acyl-carrier-protein] and UDP-N-acetyl-alpha-D-glucosamine: step 2/6. In terms of biological role, catalyzes the hydrolysis of UDP-3-O-myristoyl-N-acetylglucosamine to form UDP-3-O-myristoylglucosamine and acetate, the committed step in lipid A biosynthesis. This Chlamydia trachomatis serovar A (strain ATCC VR-571B / DSM 19440 / HAR-13) protein is UDP-3-O-acyl-N-acetylglucosamine deacetylase.